The primary structure comprises 346 residues: tRNA pseudouridine synthase D (346 aa).

Asp81 (nucleophile) is an active-site residue. The TRUD domain occupies 157-303 (GVPNYFGLQR…MKHERRILRL (147 aa)).

The protein belongs to the pseudouridine synthase TruD family.

The catalysed reaction is uridine(13) in tRNA = pseudouridine(13) in tRNA. Its function is as follows. Responsible for synthesis of pseudouridine from uracil-13 in transfer RNAs. This Stutzerimonas stutzeri (strain A1501) (Pseudomonas stutzeri) protein is tRNA pseudouridine synthase D.